We begin with the raw amino-acid sequence, 199 residues long: Pneumococcal vaccine antigen A homolog (199 aa).

The protein localises to the cell surface. In Streptococcus pyogenes serotype M1, this protein is Pneumococcal vaccine antigen A homolog (pvaA).